A 401-amino-acid chain; its full sequence is G2/mitotic-specific cyclin-B1 (401 aa).

Disordered regions lie at residues 1–30 (MALR…PTLK) and 84–103 (KVQV…ETSG). A compositionally biased stretch (polar residues) spans 9–26 (RLASTRAEQGGKTCSVSG).

It belongs to the cyclin family. Cyclin AB subfamily. Interacts with the CDK1 protein kinase to form a serine/threonine kinase holoenzyme complex also known as maturation promoting factor (MPF). The cyclin subunit imparts substrate specificity to the complex.

Functionally, essential for the control of the cell cycle at the G2/M (mitosis) transition. The polypeptide is G2/mitotic-specific cyclin-B1 (ccnb1) (Oryzias javanicus (Javanese ricefish)).